The primary structure comprises 343 residues: RNA-binding protein 43 (343 aa).

The RRM domain occupies 15–90; sequence RTVVVSGLPV…PRLTVSHFSE (76 aa).

This is RNA-binding protein 43 (Rbm43) from Mus musculus (Mouse).